The sequence spans 280 residues: Pantothenate synthetase (280 aa).

26–33 (MGNLHEGH) contributes to the ATP binding site. Histidine 33 (proton donor) is an active-site residue. Glutamine 57 contacts (R)-pantoate. Residue glutamine 57 participates in beta-alanine binding. Position 145–148 (145–148 (GKKD)) interacts with ATP. Glutamine 151 is a binding site for (R)-pantoate. ATP contacts are provided by residues valine 174 and 182–185 (LSSR).

This sequence belongs to the pantothenate synthetase family. As to quaternary structure, homodimer.

The protein localises to the cytoplasm. It carries out the reaction (R)-pantoate + beta-alanine + ATP = (R)-pantothenate + AMP + diphosphate + H(+). The protein operates within cofactor biosynthesis; (R)-pantothenate biosynthesis; (R)-pantothenate from (R)-pantoate and beta-alanine: step 1/1. Catalyzes the condensation of pantoate with beta-alanine in an ATP-dependent reaction via a pantoyl-adenylate intermediate. This is Pantothenate synthetase from Bordetella bronchiseptica (strain ATCC BAA-588 / NCTC 13252 / RB50) (Alcaligenes bronchisepticus).